The chain runs to 61 residues: Copper metallothionein 1-1 (61 aa).

Positions 1–8 are excised as a propeptide; sequence MFSELINF. The Cu cation site is built by C15, C17, C19, C22, and C28. Residue K30 forms a Glycyl lysine isopeptide (Lys-Gly) (interchain with G-Cter in ubiquitin) linkage. The Cu cation site is built by C32, C34, C38, C44, and C46. Residues 37-61 are disordered; sequence GCNSDDKCPCGNKSEETKKSCCSGK. Basic and acidic residues predominate over residues 40–55; sequence SDDKCPCGNKSEETKK.

Belongs to the metallothionein superfamily. Type 12 family.

Protects the cell against copper toxicity by tightly chelating copper ions. May also act as a depository for copper designated for the effective transfer into the apo forms of copper proteins. In Saccharomyces cerevisiae (strain ATCC 204508 / S288c) (Baker's yeast), this protein is Copper metallothionein 1-1 (CUP1-1).